A 131-amino-acid polypeptide reads, in one-letter code: Protein anoxia up-regulated (131 aa).

The span at 1 to 24 (MVYESGFTTRRTYSSRPVTTSYAV) shows a compositional bias: polar residues. Residues 1–121 (MVYESGFTTR…STTSGNLPGG (121 aa)) form a disordered region. Composition is skewed to low complexity over residues 44–53 (SSDYSYTSKS) and 98–116 (TSTT…TTSG).

As to expression, concentrated in lamina neurons, first optic lobe neurons and cortical neurons of central brain.

Plays an important role in the regulation of tissue responsiveness to oxygen deprivation. This is Protein anoxia up-regulated from Drosophila melanogaster (Fruit fly).